We begin with the raw amino-acid sequence, 57 residues long: uncharacterized protein (57 aa).

A helical membrane pass occupies residues 34 to 54 (AALLDAAALVVIPGLLTVAAV).

It localises to the membrane. This is an uncharacterized protein from Dictyostelium discoideum (Social amoeba).